A 1606-amino-acid chain; its full sequence is Pentafunctional AROM polypeptide (1606 aa).

Residues 1 to 390 (MANADVLKVS…YEPKATVVPD (390 aa)) form a 3-dehydroquinate synthase region. NAD(+) contacts are provided by residues 45 to 47 (DTN), 85 to 88 (ETSK), 116 to 118 (GGV), and Asp121. Arg132 is a 7-phospho-2-dehydro-3-deoxy-D-arabino-heptonate binding site. 141-142 (TT) lines the NAD(+) pocket. 7-phospho-2-dehydro-3-deoxy-D-arabino-heptonate contacts are provided by Asp148 and Lys154. Position 163 (Lys163) interacts with NAD(+). Position 164 (Asn164) interacts with 7-phospho-2-dehydro-3-deoxy-D-arabino-heptonate. Residues 181-184 (FLET) and Asn192 each bind NAD(+). Glu196 serves as a coordination point for Zn(2+). 7-phospho-2-dehydro-3-deoxy-D-arabino-heptonate is bound by residues 196 to 199 (EVVK) and Lys256. The active-site Proton acceptor; for 3-dehydroquinate synthase activity is Glu266. Residues 270–274 (RNLVN) and His277 contribute to the 7-phospho-2-dehydro-3-deoxy-D-arabino-heptonate site. His277 is a binding site for Zn(2+). His281 acts as the Proton acceptor; for 3-dehydroquinate synthase activity in catalysis. Residues His293 and Lys362 each coordinate 7-phospho-2-dehydro-3-deoxy-D-arabino-heptonate. Residue His293 participates in Zn(2+) binding. The interval 403–850 (VIPGVPRHHP…WDDLENKIGL (448 aa)) is EPSP synthase. Cys832 (for EPSP synthase activity) is an active-site residue. Positions 875 to 1070 (AASIILIGMR…TSGRRSYFLC (196 aa)) are shikimate kinase. 882 to 889 (GMRGTGKT) contacts ATP. The interval 1071–1296 (LTYPDVTQSF…AAPGQLSFKQ (226 aa)) is 3-dehydroquinase. The Proton acceptor; for 3-dehydroquinate dehydratase activity role is filled by His1198. Lys1226 functions as the Schiff-base intermediate with substrate; for 3-dehydroquinate dehydratase activity in the catalytic mechanism. The interval 1309 to 1606 (AQRFYLFGTP…QFVFEEECES (298 aa)) is shikimate dehydrogenase.

In the N-terminal section; belongs to the sugar phosphate cyclases superfamily. Dehydroquinate synthase family. It in the 2nd section; belongs to the EPSP synthase family. The protein in the 3rd section; belongs to the shikimate kinase family. This sequence in the 4th section; belongs to the type-I 3-dehydroquinase family. In the C-terminal section; belongs to the shikimate dehydrogenase family. As to quaternary structure, homodimer. Zn(2+) is required as a cofactor.

Its subcellular location is the cytoplasm. It catalyses the reaction 7-phospho-2-dehydro-3-deoxy-D-arabino-heptonate = 3-dehydroquinate + phosphate. It carries out the reaction 3-dehydroquinate = 3-dehydroshikimate + H2O. The enzyme catalyses shikimate + NADP(+) = 3-dehydroshikimate + NADPH + H(+). The catalysed reaction is shikimate + ATP = 3-phosphoshikimate + ADP + H(+). It catalyses the reaction 3-phosphoshikimate + phosphoenolpyruvate = 5-O-(1-carboxyvinyl)-3-phosphoshikimate + phosphate. Its pathway is metabolic intermediate biosynthesis; chorismate biosynthesis; chorismate from D-erythrose 4-phosphate and phosphoenolpyruvate: step 2/7. It functions in the pathway metabolic intermediate biosynthesis; chorismate biosynthesis; chorismate from D-erythrose 4-phosphate and phosphoenolpyruvate: step 3/7. It participates in metabolic intermediate biosynthesis; chorismate biosynthesis; chorismate from D-erythrose 4-phosphate and phosphoenolpyruvate: step 4/7. The protein operates within metabolic intermediate biosynthesis; chorismate biosynthesis; chorismate from D-erythrose 4-phosphate and phosphoenolpyruvate: step 5/7. Its pathway is metabolic intermediate biosynthesis; chorismate biosynthesis; chorismate from D-erythrose 4-phosphate and phosphoenolpyruvate: step 6/7. The AROM polypeptide catalyzes 5 consecutive enzymatic reactions in prechorismate polyaromatic amino acid biosynthesis. The chain is Pentafunctional AROM polypeptide from Laccaria bicolor (strain S238N-H82 / ATCC MYA-4686) (Bicoloured deceiver).